Reading from the N-terminus, the 782-residue chain is Hypersensitive to pore-forming toxin protein 40 (782 aa).

The 66-residue stretch at 138–203 (ESEIVPGAMY…TLFVSDQFSI (66 aa)) folds into the Tudor; degenerate domain. 2 stretches are compositionally biased toward polar residues: residues 332-346 (SVNP…SSSM) and 413-443 (FEST…STIQ). 4 disordered regions span residues 332–351 (SVNP…DCPY), 413–448 (FEST…NEED), 472–492 (IERP…NMSE), and 617–672 (VAQG…LEDP). Positions 617-634 (VAQGSNAPKTAPNDSVNS) are enriched in polar residues. Over residues 638–662 (DDIHETDKRGNHCKSVTEDPKDNKD) the composition is skewed to basic and acidic residues.

Its subcellular location is the cytoplasm. The protein resides in the perinuclear region. This Caenorhabditis elegans protein is Hypersensitive to pore-forming toxin protein 40.